The primary structure comprises 878 residues: Splicing factor 3B subunit 2 (878 aa).

Basic and acidic residues predominate over residues 1–10 (MAAEHPEPPK). 2 disordered regions span residues 1-25 (MAAEHPEPPKGELQLPPPPPPGHYG) and 67-136 (RPVL…LRVG). A Glycyl lysine isopeptide (Lys-Gly) (interchain with G-Cter in SUMO2) cross-link involves residue Lys10. The 35-residue stretch at 24–58 (YGAWAAQELQARLAEIGAPIQGSREELVERLQTYT) folds into the SAP domain. 2 stretches are compositionally biased toward pro residues: residues 91–114 (PMPPPPMGLPPLQPPPPPPPPPPG) and 122–133 (AHPPNLGPPPPL). Residues 140–177 (ALSEEERLKLAQQQAALLMQQEERAKQAAVLMEQERQQ) are a coiled coil. 2 disordered regions span residues 183–356 (GTAV…EYVT) and 383–436 (KKEK…SKKK). The segment covering 201-221 (PLGPRVAAPVGPVVPTPTVLP) has biased composition (low complexity). 3 positions are modified to omega-N-methylarginine: Arg205, Arg228, and Arg230. A compositionally biased stretch (pro residues) spans 224–237 (APVPRPRGPPPPPG). Lys258 is subject to N6-acetyllysine. The span at 260–269 (LQLKESRQEE) shows a compositional bias: basic and acidic residues. Residue Lys263 forms a Glycyl lysine isopeptide (Lys-Gly) (interchain with G-Cter in SUMO2) linkage. At Ser272 the chain carries Phosphoserine. A Phosphothreonine modification is found at Thr281. Phosphoserine occurs at positions 290 and 292. At Thr294 the chain carries Phosphothreonine. At Ser300 the chain carries Phosphoserine. Residues 305–321 (EKNRKRRNRKKKKKPQR) show a composition bias toward basic residues. Residues 330-342 (SGDREKDSGRSRG) show a composition bias toward basic and acidic residues. Position 343 is a phosphoserine (Ser343). Residues Lys383 and Lys395 each participate in a glycyl lysine isopeptide (Lys-Gly) (interchain with G-Cter in SUMO2) cross-link. Basic and acidic residues-rich tracts occupy residues 383 to 397 (KKEKEKEPEKLDKME) and 405 to 414 (KGFEEEHKDS). The interval 384 to 533 (KEKEKEPEKL…QEKEEQKTMK (150 aa)) is required for interaction with PRMT9. Residues Ser414, Ser418, and Ser419 each carry the phosphoserine modification. Residue Lys475 forms a Glycyl lysine isopeptide (Lys-Gly) (interchain with G-Cter in SUMO2) linkage. Omega-N-methylarginine occurs at positions 491 and 498. Residue Arg491 is modified to Symmetric dimethylarginine. Lys526 is covalently cross-linked (Glycyl lysine isopeptide (Lys-Gly) (interchain with G-Cter in SUMO2)). The segment at 674-740 (AAEFQTKTEE…PGGFSSVPAG (67 aa)) is disordered. Positions 695-715 (EPSDEESSEEEEEEESDEDKP) are enriched in acidic residues. A Glycyl lysine isopeptide (Lys-Gly) (interchain with G-Cter in SUMO2) cross-link involves residue Lys753. Thr763 is subject to Phosphothreonine. Glycyl lysine isopeptide (Lys-Gly) (interchain with G-Cter in SUMO2) cross-links involve residues Lys773, Lys826, and Lys840. A compositionally biased stretch (basic and acidic residues) spans 827–852 (YEEHVREQQAQVEKEDFSDMVAEHAA). Residues 827 to 878 (YEEHVREQQAQVEKEDFSDMVAEHAAKQKQKKRKAQPQDSRGGSKKYKEFKF) are disordered. Ser844 bears the Phosphoserine mark.

As to quaternary structure, component of the 17S U2 SnRNP complex, a ribonucleoprotein complex that contains small nuclear RNA (snRNA) U2 and a number of specific proteins. Part of the SF3B subcomplex of the 17S U2 SnRNP complex. SF3B associates with the splicing subcomplex SF3A and a 12S RNA unit to form the U2 small nuclear ribonucleoproteins complex (U2 snRNP). Within the SF3B complex, interacts directly with SF3B4. Found in a complex with PRMT9, SF3B2 and SF3B4. Interacts (Arg-491-methylated form) with SMN1 (via Tudor domain). Interacts with RBM7. Interacts with ERCC6. Component of the minor spliceosome. Within this complex, interacts with SCNM1 and CRIPT. Post-translationally, methylation at Arg-491 by PRMT9 is required for the interaction with SMN1.

The protein resides in the nucleus. It localises to the nucleus speckle. Functionally, component of the 17S U2 SnRNP complex of the spliceosome, a large ribonucleoprotein complex that removes introns from transcribed pre-mRNAs. The 17S U2 SnRNP complex (1) directly participates in early spliceosome assembly and (2) mediates recognition of the intron branch site during pre-mRNA splicing by promoting the selection of the pre-mRNA branch-site adenosine, the nucleophile for the first step of splicing. Within the 17S U2 SnRNP complex, SF3B2 is part of the SF3B subcomplex, which is required for 'A' complex assembly formed by the stable binding of U2 snRNP to the branchpoint sequence in pre-mRNA. Sequence independent binding of SF3A and SF3B subcomplexes upstream of the branch site is essential, it may anchor U2 snRNP to the pre-mRNA. May also be involved in the assembly of the 'E' complex. Also acts as a component of the minor spliceosome, which is involved in the splicing of U12-type introns in pre-mRNAs. The polypeptide is Splicing factor 3B subunit 2 (Mus musculus (Mouse)).